The primary structure comprises 1185 residues: Chromosome partition protein Smc (1185 aa).

32 to 39 (PNGSGKSN) is a binding site for ATP. Positions 167-494 (ISKYKSRKMD…KLNEKNSHLS (328 aa)) form a coiled coil. Residues 521 to 639 (TGIIGVVADQ…TDLKSAIEIA (119 aa)) form the SMC hinge domain. Residues 677 to 1031 (RSRKIEDLKK…KVIQEIEETM (355 aa)) are a coiled coil.

It belongs to the SMC family. In terms of assembly, homodimer.

It localises to the cytoplasm. Required for chromosome condensation and partitioning. The chain is Chromosome partition protein Smc from Halothermothrix orenii (strain H 168 / OCM 544 / DSM 9562).